Here is a 40-residue protein sequence, read N- to C-terminus: Ribosome-inactivating protein saporin-1 (40 aa).

This sequence belongs to the ribosome-inactivating protein family. Type 1 RIP subfamily.

It catalyses the reaction Endohydrolysis of the N-glycosidic bond at one specific adenosine on the 28S rRNA.. Its function is as follows. Ribosome-inactivating protein of type 1, inhibits protein synthesis in animal cells. This Saponaria officinalis (Common soapwort) protein is Ribosome-inactivating protein saporin-1 (SAP1).